The chain runs to 241 residues: 3-dehydroquinate dehydratase (241 aa).

Residues 35 to 37 (ELR) and R70 each bind 3-dehydroquinate. Residue H133 is the Proton donor/acceptor of the active site. K160 (schiff-base intermediate with substrate) is an active-site residue. Residues R202 and Q225 each coordinate 3-dehydroquinate.

The protein belongs to the type-I 3-dehydroquinase family. Homodimer.

It catalyses the reaction 3-dehydroquinate = 3-dehydroshikimate + H2O. It functions in the pathway metabolic intermediate biosynthesis; chorismate biosynthesis; chorismate from D-erythrose 4-phosphate and phosphoenolpyruvate: step 3/7. In terms of biological role, involved in the third step of the chorismate pathway, which leads to the biosynthesis of aromatic amino acids. Catalyzes the cis-dehydration of 3-dehydroquinate (DHQ) and introduces the first double bond of the aromatic ring to yield 3-dehydroshikimate. This Staphylococcus haemolyticus (strain JCSC1435) protein is 3-dehydroquinate dehydratase.